Consider the following 453-residue polypeptide: tRNA modification GTPase MnmE (453 aa).

The (6S)-5-formyl-5,6,7,8-tetrahydrofolate site is built by Arg-22, Glu-79, and Lys-119. One can recognise a TrmE-type G domain in the interval Gly-215–Gly-376. Residue Asn-225 participates in K(+) binding. Residues Asn-225 to Ser-230, Thr-244 to Thr-250, Asp-269 to Gly-272, and Asn-334 to Asp-337 contribute to the GTP site. A Mg(2+)-binding site is contributed by Ser-229. K(+) is bound by residues Thr-244, Ile-246, and Thr-249. Thr-250 contacts Mg(2+). (6S)-5-formyl-5,6,7,8-tetrahydrofolate is bound at residue Lys-453.

The protein belongs to the TRAFAC class TrmE-Era-EngA-EngB-Septin-like GTPase superfamily. TrmE GTPase family. Homodimer. Heterotetramer of two MnmE and two MnmG subunits. K(+) is required as a cofactor.

It is found in the cytoplasm. Exhibits a very high intrinsic GTPase hydrolysis rate. Involved in the addition of a carboxymethylaminomethyl (cmnm) group at the wobble position (U34) of certain tRNAs, forming tRNA-cmnm(5)s(2)U34. The chain is tRNA modification GTPase MnmE from Shewanella woodyi (strain ATCC 51908 / MS32).